The sequence spans 720 residues: DNA gyrase subunit B (720 aa).

Residues 1-26 (MVDAMPENPAEEPTAASAAPNPEAVP) show a composition bias toward low complexity. The tract at residues 1–42 (MVDAMPENPAEEPTAASAAPNPEAVPDAVGQPEAPVKDRKVP) is disordered. The Toprim domain maps to 498-612 (CEVYIVEGDS…AGHVFLAQPP (115 aa)). Positions 504, 577, and 579 each coordinate Mg(2+).

Belongs to the type II topoisomerase GyrB family. As to quaternary structure, heterotetramer, composed of two GyrA and two GyrB chains. In the heterotetramer, GyrA contains the active site tyrosine that forms a transient covalent intermediate with the DNA, while GyrB binds cofactors and catalyzes ATP hydrolysis. Requires Mg(2+) as cofactor. The cofactor is Mn(2+). It depends on Ca(2+) as a cofactor.

The protein resides in the cytoplasm. The catalysed reaction is ATP-dependent breakage, passage and rejoining of double-stranded DNA.. With respect to regulation, supercoiling activity inhibited by novobiocin and coumermycin, DNA wrapping around gyrase is not inhibited. Its function is as follows. A type II topoisomerase that negatively supercoils DNA in an ATP-dependent manner. About 140 bp of DNA wraps around gyrase in the presence or absence of ATP, when ATP is added negative supercoils are made. In terms of biological role, a type II topoisomerase that negatively supercoils closed circular double-stranded (ds) DNA in an ATP-dependent manner to modulate DNA topology and maintain chromosomes in an underwound state. Negative supercoiling favors strand separation, and DNA replication, transcription, recombination and repair, all of which involve strand separation. Also able to catalyze the interconversion of other topological isomers of dsDNA rings, including catenanes and knotted rings. Type II topoisomerases break and join 2 DNA strands simultaneously in an ATP-dependent manner. The chain is DNA gyrase subunit B from Micrococcus luteus (strain ATCC 4698 / DSM 20030 / JCM 1464 / CCM 169 / CCUG 5858 / IAM 1056 / NBRC 3333 / NCIMB 9278 / NCTC 2665 / VKM Ac-2230) (Micrococcus lysodeikticus).